A 547-amino-acid chain; its full sequence is T-complex protein 1 subunit gamma (547 aa).

Gly-41 is a binding site for ADP. Position 41 (Gly-41) interacts with ATP. Residue Asp-92 participates in Mg(2+) binding. The ADP site is built by Gly-93, Thr-94, Thr-95, Ser-96, Thr-161, and Lys-162. Residues Gly-93, Thr-94, and Thr-95 each coordinate ATP. Cys-365 and Cys-371 form a disulfide bridge. 5 residues coordinate ADP: Gly-410, Gly-481, Glu-482, Glu-496, and Lys-501. Gly-410 and Gly-481 together coordinate ATP. Glu-496 is a binding site for ATP. Positions 525–534 (HKKKGEDHGR) are enriched in basic and acidic residues. The disordered stretch occupies residues 525–547 (HKKKGEDHGRQPAAAPEAPQQAE). A compositionally biased stretch (low complexity) spans 535–547 (QPAAAPEAPQQAE).

Belongs to the TCP-1 chaperonin family. As to quaternary structure, component of the chaperonin-containing T-complex (TRiC), a hexadecamer composed of two identical back-to-back stacked rings enclosing a protein folding chamber. Each ring is made up of eight different subunits: TCP1/CCT1, CCT2, CCT3, CCT4, CCT5, CCT6A/CCT6, CCT7, CCT8.

It is found in the cytoplasm. The enzyme catalyses ATP + H2O = ADP + phosphate + H(+). In terms of biological role, component of the chaperonin-containing T-complex (TRiC), a molecular chaperone complex that assists the folding of actin, tubulin and other proteins upon ATP hydrolysis. In Xenopus laevis (African clawed frog), this protein is T-complex protein 1 subunit gamma (cct3).